Consider the following 597-residue polypeptide: DNA import protein CedB (597 aa).

Residues 10-30 (VVLLILGIISFNLVFIILAII) traverse the membrane as a helical segment. 286–293 (GPTGSGKT) lines the ATP pocket.

It is found in the cell membrane. Functionally, part of the Ced system, which is involved in DNA import. The polypeptide is DNA import protein CedB (Sulfolobus acidocaldarius (strain ATCC 33909 / DSM 639 / JCM 8929 / NBRC 15157 / NCIMB 11770)).